The chain runs to 237 residues: Oligoribonuclease, mitochondrial (237 aa).

Residues 1–25 constitute a mitochondrion transit peptide; the sequence is MLGGSLGSRLLRGVGGSHGRFGARG. Residues 43–207 enclose the Exonuclease domain; it reads MVWVDLEMTG…DDISESIKEL (165 aa). Mg(2+) contacts are provided by aspartate 47 and glutamate 49. Serine 92 is subject to Phosphoserine. Tyrosine 122 bears the Phosphotyrosine mark. Aspartate 147 provides a ligand contact to Mg(2+). Lysine 173 bears the N6-acetyllysine mark. Residue histidine 194 is part of the active site. A Mg(2+)-binding site is contributed by aspartate 199.

This sequence belongs to the oligoribonuclease family. In terms of assembly, homodimer. Homotetramer. The cofactor is Mn(2+). Requires Mg(2+) as cofactor. Highly expressed in the heart and at lower levels in the lymph nodes, brain, lung, liver, spleen and thymus.

Its subcellular location is the mitochondrion intermembrane space. It is found in the mitochondrion matrix. The protein localises to the mitochondrion. The protein resides in the cytoplasm. It localises to the nucleus. Inhibited by adenosine 3',5'-bisphosphate. 3'-to-5'exoribonuclease that preferentially degrades DNA and RNA oligonucleotides composed of only two nucleotides. Binds and degrades longer oligonucleotides with a lower affinity. Plays dual roles in mitochondria, scavenging nanoRNAs (small RNA oligonucleotides of &lt;5 nucleotides) that are produced by the degradosome and clearing short RNAs that are generated by RNA processing. Essential for correct initiation of mitochondrial transcription, degrading mitochondrial RNA dinucleotides to prevent RNA-primed transcription at non-canonical sites in the mitochondrial genome. Essential for embryonic development. Functionally, 3'-to-5'exoribonuclease that preferentially degrades DNA and RNA oligonucleotides composed of only two nucleotides. In Homo sapiens (Human), this protein is Oligoribonuclease, mitochondrial (REXO2).